A 195-amino-acid chain; its full sequence is Large ribosomal subunit protein uL5 (195 aa).

The protein belongs to the universal ribosomal protein uL5 family. In terms of assembly, part of the 50S ribosomal subunit; part of the 5S rRNA/L5/L18/L25 subcomplex. Contacts the 5S rRNA and the P site tRNA. Forms a bridge to the 30S subunit in the 70S ribosome.

Functionally, this is one of the proteins that bind and probably mediate the attachment of the 5S RNA into the large ribosomal subunit, where it forms part of the central protuberance. In the 70S ribosome it contacts protein S13 of the 30S subunit (bridge B1b), connecting the 2 subunits; this bridge is implicated in subunit movement. Contacts the P site tRNA; the 5S rRNA and some of its associated proteins might help stabilize positioning of ribosome-bound tRNAs. The chain is Large ribosomal subunit protein uL5 from Chlorobium phaeobacteroides (strain DSM 266 / SMG 266 / 2430).